Here is a 1040-residue protein sequence, read N- to C-terminus: Activated CDC42 kinase 1 (1040 aa).

Residues Met-1–Gly-110 form an SAM-like domain region. Residues Glu-86 to Ala-109 form a disordered region. Thr-113 carries the phosphothreonine modification. Residues Leu-126 to Leu-385 form the Protein kinase domain. Residues Leu-132–Val-140 and Lys-158 contribute to the ATP site. The active-site Proton acceptor is the Asp-252. Phosphotyrosine; by SRC and autocatalysis is present on Tyr-284. The SH3 domain maps to Ala-388 to Gly-448. Residues Arg-505–Pro-527 form a disordered region. Tyr-518 carries the phosphotyrosine modification. Residues Asp-623–Ser-652 are required for interaction with SRC. Residues Pro-632–Tyr-635 are required for interaction with NEDD4. Residues Thr-722–Asp-824 form a disordered region. An EBD domain region spans residues Gly-733 to Leu-876. 2 stretches are compositionally biased toward pro residues: residues Gln-738–Pro-749 and Pro-772–Pro-783. Positions Pro-802 to Gly-812 are enriched in low complexity. A Phosphotyrosine modification is found at Tyr-827. Arg-839 carries the post-translational modification Omega-N-methylarginine. 2 positions are modified to phosphotyrosine: Tyr-859 and Tyr-872. Phosphoserine is present on Ser-881. Residues Ser-881–Arg-957 form a disordered region. Pro residues predominate over residues Leu-888–Ala-903. Over residues Asn-922–Gly-931 the composition is skewed to polar residues. The 41-residue stretch at Pro-958 to Glu-998 folds into the UBA domain.

It belongs to the protein kinase superfamily. Tyr protein kinase family. Homodimer. Interacts with CDC42. Interacts with CSPG4 (activated). Interacts with MERTK (activated); stimulates autophosphorylation. May interact (phosphorylated) with HSP90AB1; maintains kinase activity. Interacts with NPHP1. Interacts with SNX9 (via SH3 domain). Interacts with SRC (via SH2 and SH3 domain). Interacts with EGFR, and this interaction is dependent on EGF stimulation and kinase activity of EGFR. Interacts (via kinase domain) with AKT1. Part of a collagen stimulated complex involved in cell migration composed of CDC42, CRK, TNK2 and BCAR1/p130cas. Interacts with BCAR1/p130cas via SH3 domains. Forms complexes with GRB2 and numerous receptor tyrosine kinases (RTK) including LTK, AXL or PDGFRL, in which GRB2 promotes RTK recruitment by TNK2. Interacts with NEDD4 (via WW3 domain). NEDD4L and EGF promote association with NEDD4. Requires Mg(2+) as cofactor. Autophosphorylation regulates kinase activity. Phosphorylation on Tyr-518 is required for interaction with SRC and is observed during association with clathrin-coated pits. Post-translationally, polyubiquitinated by NEDD4 and NEDD4L. Degradation can be induced by EGF and is lysosome-dependent.

Its subcellular location is the cell membrane. It localises to the nucleus. The protein resides in the endosome. The protein localises to the cell junction. It is found in the adherens junction. Its subcellular location is the cytoplasmic vesicle membrane. It localises to the cytoplasmic vesicle. The protein resides in the clathrin-coated vesicle. The protein localises to the membrane. It is found in the clathrin-coated pit. Its subcellular location is the cytoplasm. It localises to the cytosol. The enzyme catalyses L-tyrosyl-[protein] + ATP = O-phospho-L-tyrosyl-[protein] + ADP + H(+). It carries out the reaction L-seryl-[protein] + ATP = O-phospho-L-seryl-[protein] + ADP + H(+). The catalysed reaction is L-threonyl-[protein] + ATP = O-phospho-L-threonyl-[protein] + ADP + H(+). Functionally, non-receptor tyrosine-protein and serine/threonine-protein kinase that is implicated in cell spreading and migration, cell survival, cell growth and proliferation. Transduces extracellular signals to cytosolic and nuclear effectors. Phosphorylates AKT1, AR, MCF2, WASL and WWOX. Implicated in trafficking and clathrin-mediated endocytosis through binding to epidermal growth factor receptor (EGFR) and clathrin. Binds to both poly- and mono-ubiquitin and regulates ligand-induced degradation of EGFR, thereby contributing to the accumulation of EGFR at the limiting membrane of early endosomes. Downstream effector of CDC42 which mediates CDC42-dependent cell migration via phosphorylation of BCAR1. May be involved both in adult synaptic function and plasticity and in brain development. Activates AKT1 by phosphorylating it on 'Tyr-176'. Phosphorylates AR on 'Tyr-267' and 'Tyr-363', thereby promoting its recruitment to androgen-responsive enhancers (AREs). Phosphorylates WWOX on 'Tyr-287'. Phosphorylates MCF2, thereby enhancing its activity as a guanine nucleotide exchange factor (GEF) toward Rho family proteins. Contributes to the control of AXL receptor levels. Confers metastatic properties on cancer cells and promotes tumor growth by negatively regulating tumor suppressor such as WWOX and positively regulating pro-survival factors such as AKT1 and AR. This chain is Activated CDC42 kinase 1, found in Rattus norvegicus (Rat).